A 509-amino-acid chain; its full sequence is Lysine--tRNA ligase (509 aa).

Glu-417 and Glu-424 together coordinate Mg(2+).

The protein belongs to the class-II aminoacyl-tRNA synthetase family. As to quaternary structure, homodimer. Mg(2+) is required as a cofactor.

It localises to the cytoplasm. It catalyses the reaction tRNA(Lys) + L-lysine + ATP = L-lysyl-tRNA(Lys) + AMP + diphosphate. The chain is Lysine--tRNA ligase from Blochmanniella pennsylvanica (strain BPEN).